A 154-amino-acid polypeptide reads, in one-letter code: UPF0178 protein SSP2038 (154 aa).

This sequence belongs to the UPF0178 family.

The chain is UPF0178 protein SSP2038 from Staphylococcus saprophyticus subsp. saprophyticus (strain ATCC 15305 / DSM 20229 / NCIMB 8711 / NCTC 7292 / S-41).